We begin with the raw amino-acid sequence, 196 residues long: Superoxide dismutase [Fe] (196 aa).

4 residues coordinate Fe cation: histidine 20, histidine 68, aspartate 157, and histidine 161.

The protein belongs to the iron/manganese superoxide dismutase family. Homotetramer. Requires Fe cation as cofactor.

It catalyses the reaction 2 superoxide + 2 H(+) = H2O2 + O2. Functionally, destroys superoxide anion radicals which are normally produced within the cells and which are toxic to biological systems. The polypeptide is Superoxide dismutase [Fe] (Tetrahymena pyriformis).